Reading from the N-terminus, the 465-residue chain is Putative subtilisin-like proteinase 1 (465 aa).

The N-terminal stretch at 1–17 (MILAIISLSVVICREVS) is a signal peptide. Residues 19 to 90 (YIVMFDQDPS…VKMVVKDSPV (72 aa)) form the Inhibitor I9 domain. A Peptidase S8 domain is found at 115-447 (PWGLARVGGS…PSLFNANKKK (333 aa)). Active-site charge relay system residues include Asp148 and His180. Residues Cys329 and Cys360 are joined by a disulfide bond. Catalysis depends on Ser386, which acts as the Charge relay system.

The protein belongs to the peptidase S8 family.

Its subcellular location is the secreted. It localises to the extracellular space. In terms of biological role, may be involved in the degradation of proteins for nutrient acquisition or possess a regulatory function by proteolytic activation of proproteins. This chain is Putative subtilisin-like proteinase 1 (SPL1), found in Encephalitozoon cuniculi (strain GB-M1) (Microsporidian parasite).